The chain runs to 81 residues: U10-myrmicitoxin-Mri1b (81 aa).

A signal peptide spans 1-26 (MRLSYISLTLAIIFVMAIVHAPETEA). Residues 27-52 (KAYPEADAVAEAIAVGEADAVGVADP) constitute a propeptide that is removed on maturation. Val80 bears the Valine amide mark.

This sequence belongs to the formicidae venom precursor-01 superfamily. Expressed by the venom gland.

It localises to the secreted. Functionally, induces paralysis after injection into blowflies (L.caesar), and then death within 24 hours. May have antimicrobial properties, like most ant linear peptides. This Manica rubida (European giant red ant) protein is U10-myrmicitoxin-Mri1b.